Here is a 712-residue protein sequence, read N- to C-terminus: Methylmalonyl-CoA mutase (712 aa).

Substrate-binding positions include Thr73 to Tyr77, Thr183 to Gln185, Arg195, Lys222, His232, and Arg271 to Ser273. The 133-residue stretch at Lys580 to Val712 folds into the B12-binding domain. His593 contributes to the adenosylcob(III)alamin binding site.

This sequence belongs to the methylmalonyl-CoA mutase family. In terms of assembly, homodimer. Requires adenosylcob(III)alamin as cofactor. The cofactor is a monovalent cation.

It carries out the reaction (R)-methylmalonyl-CoA = succinyl-CoA. It functions in the pathway metabolic intermediate metabolism; propanoyl-CoA degradation; succinyl-CoA from propanoyl-CoA: step 3/3. Its function is as follows. Radical enzyme that catalyzes the transformation of methylmalonyl-CoA to succinyl-CoA. Is required for growth on the polyhydroxyalkanoate degradation pathway intermediates 3-hydroxybutyrate and acetoacetate as sole carbon source. This Rhizobium meliloti (strain 1021) (Ensifer meliloti) protein is Methylmalonyl-CoA mutase.